A 468-amino-acid chain; its full sequence is ATP synthase subunit beta (468 aa).

148–155 (GGAGVGKT) contributes to the ATP binding site.

It belongs to the ATPase alpha/beta chains family. F-type ATPases have 2 components, CF(1) - the catalytic core - and CF(0) - the membrane proton channel. CF(1) has five subunits: alpha(3), beta(3), gamma(1), delta(1), epsilon(1). CF(0) has three main subunits: a(1), b(2) and c(9-12). The alpha and beta chains form an alternating ring which encloses part of the gamma chain. CF(1) is attached to CF(0) by a central stalk formed by the gamma and epsilon chains, while a peripheral stalk is formed by the delta and b chains.

It is found in the cell inner membrane. It carries out the reaction ATP + H2O + 4 H(+)(in) = ADP + phosphate + 5 H(+)(out). Its function is as follows. Produces ATP from ADP in the presence of a proton gradient across the membrane. The catalytic sites are hosted primarily by the beta subunits. This Xanthomonas axonopodis pv. citri (strain 306) protein is ATP synthase subunit beta.